Here is a 41-residue protein sequence, read N- to C-terminus: Large ribosomal subunit protein bL36 (41 aa).

The protein belongs to the bacterial ribosomal protein bL36 family.

The sequence is that of Large ribosomal subunit protein bL36 from Granulibacter bethesdensis (strain ATCC BAA-1260 / CGDNIH1).